Consider the following 408-residue polypeptide: S-adenosylmethionine:tRNA ribosyltransferase-isomerase (408 aa).

This sequence belongs to the QueA family. Monomer.

It is found in the cytoplasm. The catalysed reaction is 7-aminomethyl-7-carbaguanosine(34) in tRNA + S-adenosyl-L-methionine = epoxyqueuosine(34) in tRNA + adenine + L-methionine + 2 H(+). Its pathway is tRNA modification; tRNA-queuosine biosynthesis. In terms of biological role, transfers and isomerizes the ribose moiety from AdoMet to the 7-aminomethyl group of 7-deazaguanine (preQ1-tRNA) to give epoxyqueuosine (oQ-tRNA). In Trichormus variabilis (strain ATCC 29413 / PCC 7937) (Anabaena variabilis), this protein is S-adenosylmethionine:tRNA ribosyltransferase-isomerase.